Here is a 500-residue protein sequence, read N- to C-terminus: NAD(P)H-quinone oxidoreductase chain 4, chloroplastic (500 aa).

Transmembrane regions (helical) follow at residues 4–24 (FPWL…IFFL), 37–57 (IFIC…HFQL), 87–107 (IGPI…AWPV), 113–130 (LFHF…GSFS), 134–154 (LLLF…LLSM), 167–187 (FILY…GIGL), 208–228 (ALEI…SPII), 242–262 (HYST…YGLV), 272–292 (AHSI…IYAA), 305–325 (IAYS…SITD), 330–350 (GAIL…FLAG), 386–406 (LALP…GIIT), 416–436 (ILIT…SLSM), and 462–482 (LFVL…PDFV).

Belongs to the complex I subunit 4 family.

It is found in the plastid. The protein resides in the chloroplast thylakoid membrane. The catalysed reaction is a plastoquinone + NADH + (n+1) H(+)(in) = a plastoquinol + NAD(+) + n H(+)(out). It catalyses the reaction a plastoquinone + NADPH + (n+1) H(+)(in) = a plastoquinol + NADP(+) + n H(+)(out). This chain is NAD(P)H-quinone oxidoreductase chain 4, chloroplastic, found in Vitis vinifera (Grape).